Reading from the N-terminus, the 182-residue chain is NADH-quinone oxidoreductase subunit B (182 aa).

Residues Cys-46, Cys-47, Cys-112, and Cys-141 each contribute to the [4Fe-4S] cluster site.

This sequence belongs to the complex I 20 kDa subunit family. In terms of assembly, NDH-1 is composed of 14 different subunits. Subunits NuoB, C, D, E, F, and G constitute the peripheral sector of the complex. [4Fe-4S] cluster serves as cofactor.

Its subcellular location is the cell inner membrane. It catalyses the reaction a quinone + NADH + 5 H(+)(in) = a quinol + NAD(+) + 4 H(+)(out). Its function is as follows. NDH-1 shuttles electrons from NADH, via FMN and iron-sulfur (Fe-S) centers, to quinones in the respiratory chain. The immediate electron acceptor for the enzyme in this species is believed to be a menaquinone. Couples the redox reaction to proton translocation (for every two electrons transferred, four hydrogen ions are translocated across the cytoplasmic membrane), and thus conserves the redox energy in a proton gradient. The sequence is that of NADH-quinone oxidoreductase subunit B from Flavobacterium johnsoniae (strain ATCC 17061 / DSM 2064 / JCM 8514 / BCRC 14874 / CCUG 350202 / NBRC 14942 / NCIMB 11054 / UW101) (Cytophaga johnsonae).